A 220-amino-acid polypeptide reads, in one-letter code: Small ribosomal subunit protein eS1 (220 aa).

This sequence belongs to the eukaryotic ribosomal protein eS1 family.

The polypeptide is Small ribosomal subunit protein eS1 (Methanococcus vannielii (strain ATCC 35089 / DSM 1224 / JCM 13029 / OCM 148 / SB)).